Consider the following 278-residue polypeptide: Putative pyruvate, phosphate dikinase regulatory protein (278 aa).

An ADP-binding site is contributed by 156–163; it reads GVSRTSKT.

Belongs to the pyruvate, phosphate/water dikinase regulatory protein family. PDRP subfamily.

It catalyses the reaction N(tele)-phospho-L-histidyl/L-threonyl-[pyruvate, phosphate dikinase] + ADP = N(tele)-phospho-L-histidyl/O-phospho-L-threonyl-[pyruvate, phosphate dikinase] + AMP + H(+). The enzyme catalyses N(tele)-phospho-L-histidyl/O-phospho-L-threonyl-[pyruvate, phosphate dikinase] + phosphate + H(+) = N(tele)-phospho-L-histidyl/L-threonyl-[pyruvate, phosphate dikinase] + diphosphate. Functionally, bifunctional serine/threonine kinase and phosphorylase involved in the regulation of the pyruvate, phosphate dikinase (PPDK) by catalyzing its phosphorylation/dephosphorylation. The sequence is that of Putative pyruvate, phosphate dikinase regulatory protein from Lactobacillus acidophilus (strain ATCC 700396 / NCK56 / N2 / NCFM).